We begin with the raw amino-acid sequence, 434 residues long: Gamma-glutamyl phosphate reductase (434 aa).

Polar residues predominate over residues 1–11 (MTNSNEAQENA). Residues 1 to 26 (MTNSNEAQENALSPERQAERDEVLAK) are disordered. A compositionally biased stretch (basic and acidic residues) spans 16–25 (RQAERDEVLA).

Belongs to the gamma-glutamyl phosphate reductase family.

The protein localises to the cytoplasm. It catalyses the reaction L-glutamate 5-semialdehyde + phosphate + NADP(+) = L-glutamyl 5-phosphate + NADPH + H(+). Its pathway is amino-acid biosynthesis; L-proline biosynthesis; L-glutamate 5-semialdehyde from L-glutamate: step 2/2. Its function is as follows. Catalyzes the NADPH-dependent reduction of L-glutamate 5-phosphate into L-glutamate 5-semialdehyde and phosphate. The product spontaneously undergoes cyclization to form 1-pyrroline-5-carboxylate. The protein is Gamma-glutamyl phosphate reductase of Corynebacterium jeikeium (strain K411).